A 371-amino-acid chain; its full sequence is Cytochrome b (371 aa).

Helical transmembrane passes span 25–45 (FGSMLLTCLALQTMTGFFLAI), 69–90 (WTMQSLHAIGASLFFICIYIHI), 105–125 (WLSGITLLFTLMATAFFGYVL), and 170–190 (FFALHFILPFIIISLSSAHIM). Positions 75 and 89 each coordinate heme b. Heme b-binding residues include histidine 174 and histidine 188. Histidine 193 serves as a coordination point for a ubiquinone. A run of 4 helical transmembrane segments spans residues 218-238 (NKDMLTATIMITMLFITLSFL), 280-300 (LGGTLALLTSVMILATTPFTH), 312-332 (MTQTLFWILIATLITITWTAT), and 339-358 (FMFISQMASMIYFSFFFMNP).

It belongs to the cytochrome b family. In terms of assembly, the cytochrome bc1 complex contains 3 respiratory subunits (MT-CYB, CYC1 and UQCRFS1), 2 core proteins (UQCRC1 and UQCRC2) and probably 6 low-molecular weight proteins. Requires heme b as cofactor.

The protein localises to the mitochondrion inner membrane. Its function is as follows. Component of the ubiquinol-cytochrome c reductase complex (complex III or cytochrome b-c1 complex) that is part of the mitochondrial respiratory chain. The b-c1 complex mediates electron transfer from ubiquinol to cytochrome c. Contributes to the generation of a proton gradient across the mitochondrial membrane that is then used for ATP synthesis. This chain is Cytochrome b (MT-CYB), found in Elapsoidea nigra (Usambara garter snake).